The sequence spans 380 residues: Chaperone protein DnaJ (380 aa).

Residues 5-70 (DYYEILGVTK…QKRAAYDRFG (66 aa)) enclose the J domain. A CR-type zinc finger spans residues 137–215 (GKAETIKIPT…CQGAGRVNRE (79 aa)). Zn(2+)-binding residues include cysteine 150, cysteine 153, cysteine 167, cysteine 170, cysteine 189, cysteine 192, cysteine 203, and cysteine 206. CXXCXGXG motif repeat units lie at residues 150 to 157 (CEVCDGSG), 167 to 174 (CPTCAGYG), 189 to 196 (CPNCHGRG), and 203 to 210 (CTACQGAG).

The protein belongs to the DnaJ family. In terms of assembly, homodimer. Requires Zn(2+) as cofactor.

It localises to the cytoplasm. In terms of biological role, participates actively in the response to hyperosmotic and heat shock by preventing the aggregation of stress-denatured proteins and by disaggregating proteins, also in an autonomous, DnaK-independent fashion. Unfolded proteins bind initially to DnaJ; upon interaction with the DnaJ-bound protein, DnaK hydrolyzes its bound ATP, resulting in the formation of a stable complex. GrpE releases ADP from DnaK; ATP binding to DnaK triggers the release of the substrate protein, thus completing the reaction cycle. Several rounds of ATP-dependent interactions between DnaJ, DnaK and GrpE are required for fully efficient folding. Also involved, together with DnaK and GrpE, in the DNA replication of plasmids through activation of initiation proteins. In Methylobacterium radiotolerans (strain ATCC 27329 / DSM 1819 / JCM 2831 / NBRC 15690 / NCIMB 10815 / 0-1), this protein is Chaperone protein DnaJ.